The sequence spans 151 residues: Protein NrdI (151 aa).

This sequence belongs to the NrdI family.

Probably involved in ribonucleotide reductase function. This Mycoplasmopsis pulmonis (strain UAB CTIP) (Mycoplasma pulmonis) protein is Protein NrdI.